The chain runs to 509 residues: Maturase K (509 aa).

Belongs to the intron maturase 2 family. MatK subfamily.

Its subcellular location is the plastid. It localises to the chloroplast. Functionally, usually encoded in the trnK tRNA gene intron. Probably assists in splicing its own and other chloroplast group II introns. In Thuja occidentalis (Northern white-cedar), this protein is Maturase K.